A 1530-amino-acid chain; its full sequence is MSCKESPHVGVSTTTVSSVAVQAGDSKIVIAVVKCGKWVRLQLAEAQPNLLEIGSSQDETRKLLHDHELLLAKLKALEDRVWGLLQEADRTAEANKEQSEVYDAMAQTLGEAWATLVSMLERRRELLGLTSEFFQSALEFAIKIDQAEDFLQNPHEFESAEALQSLLLLHDRHAKELLERSLVLLNKSQQLTDFIEKFKCDGSPVNSELIQGAQSSCLKIDSLLELLQDRRRQLDKHLQQQRQELSQVLQLCLWDQQESQVSCWFQKTIRDLQEQSLGSSLSDNKELIRKHEDLTIKAKEWDLAMEKLKSQALGILLSKDLTEKEHLQLSNQKLNRLQEEFGRLMVDRKAWLTMAHDFFTSANEAFDVLGKVEDYLKLLKSEGLSLPALAAKHEELHREIKDSTAAALQKGRTLISQVDSCRAQVTGIHETMGRIQKRVDRLSQQCTAHQEFALKKQQLATSVDDYLRKVEMSVQEMRLVLATTLDVGSSPSESEKILNKYLELDIQAKETAHALEAAAKITTEKNELELNEVALLPFKVKRLEEELSTLSRSVSYRSQVLQTYIAFRKSSEEVEEQLQSLKEFYLTESPWEDEDDAVVTCQSNSAERKWQLFLKKSFLTQDLSLEFLNLISMAKENEILNVKKEMHIVENVMEKQTNGREELSRLRMAWHLKAMEGKPVKERWETFKEKLKKTTHNVKLLHEVLMPVSALDLGGNLQSMSDLRRRWIAMQPQLQQLHEDVQQIMKEWEVLSGQGVPLKEKAEQLKDLIHLHQRQRERIQEYEEILYKTVQFHQVKEELTHLIKPRELELLAQPMELEGSKEVLMQLGRSQGRRAHVDHLHRLALSLGVDIISSVQRPNCSNISAKSLQQQLEALELDSRDWSAKAKEYEQVLACSLEYCTTREEINELKESFKDIKKKFNNLKFNYSKKNEKSRNLKTLQYQIQQVETYADKIQALRKKMEKVNKKISDSVLSYPSNKANTLVEAMEDLKKHVDDFDKVVTDYKMNLDLTEHLQEVIEECNFWYEDASATVVRVGKYSMECQTREAVDILHRQFQKFVTPSVPQQEERIQEVVSLAQRLYGLEEGQKYAEKIVTRHKEILESITELCGSLVELKEKLMQGDVPKVNSNLEDFHGNSIDLLKEPGRDEQTTFSEERSEGQAQGADVSAINGTREDGLPVGLRQSFDKEDSAQGLTLPEDTLSGEDSECISSDDISLPPLPVTPESPLAPSDMEVEEPASSSALALHISGYRMRTGTGGLGKAPESVLPPPTAFTDGYHNKKDTFTSHFERPYPQFKAEPLLTSRGSGEMSTKLHVNVKCPARMPREVHDKALPPSSQAQEISLGTQEKVHADSNVTKTQDRLHAALDVSPGLSSQSDTSRSHQRQVGPQGDRKNSSAEKSVVSLAGQAPHFSRLLSNVTVTEGSPVTLEVEVTGFPEPTLTWFKKGQKLCADGHLQVLHKDTKHSVFIPKVCEADAGLYVAQAQNSSGTLSSKAILHVTGNHGPPITRINWIVLCIIYVSVSVIYWLLTQ.

The stretch at 49-127 (NLLEIGSSQD…SMLERRRELL (79 aa)) is one Spectrin repeat. Threonine 91 is subject to Phosphothreonine. Coiled-coil stretches lie at residues 220-251 (IDSLLELLQDRRRQLDKHLQQQRQELSQVLQL), 758-785 (LKEKAEQLKDLIHLHQRQRERIQEYEEI), and 865-967 (AKSL…VNKK). 4 disordered regions span residues 1153–1240 (SEER…PASS), 1259–1285 (LGKAPESVLPPPTAFTDGYHNKKDTFT), 1324–1356 (PREVHDKALPPSSQAQEISLGTQEKVHADSNVT), and 1369–1403 (SPGLSSQSDTSRSHQRQVGPQGDRKNSSAEKSVVS). Residues 1334–1345 (PSSQAQEISLGT) are compositionally biased toward polar residues. Residues 1409–1497 (PHFSRLLSNV…GTLSSKAILH (89 aa)) form the Ig-like domain.

Interacts with DISC1. Interacts preferentially with phosphorylated forms of myosin regulatory light chain (MRLC). Interacts (via the N-terminal region) with HDAC6; inhibits the deacetylase activity of HDAC6. Interacts with KIBRA (via the C-terminal region); retains AMPAR in the cytosol after internalization. Ubiquitinated and degradated by the CDC20-APC/C pathway. During brain development, CDC20-APC/C complex degrades CCDC141 after centrosome translocation into the dilated area. CCDC141 is restabilized in the dilation until the centrosome enters the dilation, at which point it is once again immediately destabilized by CDC20-APC/C complex. The oscillatory regulation of CCDC141 protein is needed for proper cortical migration. In terms of processing, phosphorylation at Thr-91 by PLK1 affects CCDC141 degradation.

The protein localises to the cytoplasm. The protein resides in the cytoskeleton. It is found in the microtubule organizing center. Its subcellular location is the centrosome. Functionally, plays a critical role in cortical radial and GnRH neurons migration during brain development. Regulates cortical radial migration by negatively controlling the activity of histone deacetylase 6 (HDAC6) and promotes centrosome maturation. CAMDI is required for dilation formation of cortical neurons during radial migration. Plays a critical role in learning and memory performance through regulation of AMPA-selective glutamate receptors (AMPARs) cell surface expression in competition with KIBRA. The polypeptide is Coiled-coil domain-containing protein 141 (Rattus norvegicus (Rat)).